The sequence spans 858 residues: M-phase phosphoprotein 8 (858 aa).

A disordered region spans residues 18–55; the sequence is VPDSIGRSPESEGVGAGDEEKDAATKGTVAVGDSEEDG. Residues serine 51, serine 85, serine 136, and serine 138 each carry the phosphoserine modification. The Chromo domain occupies 59 to 118; sequence FEVERILDMKCEGGKNLYKVRWKGYTSEDDTWEPEVHLEDCKEVLLEFRKKLAENKAKAV. The segment at 80 to 87 is histone H3K9me3 binding; that stretch reads WKGYTSED. The segment at 129-175 is disordered; that stretch reads NDIFEADSDSDQQSDTKEDISPRKKKKKIKCKEETSPEDLRKKRTKM. At threonine 144 the chain carries Phosphothreonine. Residues serine 149 and serine 164 each carry the phosphoserine; by CDK1 modification. Over residues 159–169 the composition is skewed to basic and acidic residues; the sequence is CKEETSPEDLR. At serine 188 the chain carries Phosphoserine. 2 disordered regions span residues 209–234 and 250–300; these read ELKD…NKRA and NRKT…DKTA. Serine 267, serine 271, and serine 278 each carry phosphoserine. The span at 273–282 shows a compositional bias: acidic residues; sequence ILEDDSEDFI. Over residues 283 to 300 the composition is skewed to basic and acidic residues; the sequence is SDNREENQNVRSVRDKTA. Phosphoserine is present on serine 318. Positions 321 to 431 are disordered; it reads EDAGTRVRRK…YDLDKEEKAR (111 aa). Positions 335 to 357 are enriched in basic and acidic residues; that stretch reads RKFEEPKEIKKLESTNAFLERRA. Threonine 385 is modified (phosphothreonine; by CDK1). A phosphoserine mark is found at serine 392 and serine 400. Residues 407-431 are compositionally biased toward basic and acidic residues; that stretch reads EKEKKNEPKGKYQKRYDLDKEEKAR. Threonine 453 carries the post-translational modification Phosphothreonine. ANK repeat units follow at residues 598-627, 631-660, 664-693, and 697-726; these read TGMT…KVNG, NGTT…FVNV, NGET…DCNI, and HQNS…TLSR.

As to quaternary structure, homodimer. Interacts (via chromo domain) with histone H3K9me3. Has the highest affinity for H3K9me3, and lesser affinity for H3K9me2 and H3K9me1. Component of the HUSH complex; at least composed of TASOR, PPHLN1 and MPHOSPH8. Interacts with DNMT3, EHMT1 and SETDB1. Interacts with MORC2; the interaction associateS MORC2 with the HUSH complex which recruits MORC2 to heterochromatic loci. Interacts with ZNF638; leading to recruitment of the HUSH complex to unintegrated retroviral DNA. Interacts with TASOR. In terms of processing, phosphorylated in M (mitotic) phase. Phosphorylation by CDK1 promotes dissociation from chromatin. In terms of tissue distribution, expressed in the spermatogonia, spermatocytes and granular cells within the cerebellum.

Its subcellular location is the nucleus. The protein localises to the chromosome. In terms of biological role, heterochromatin component that specifically recognizes and binds methylated 'Lys-9' of histone H3 (H3K9me) and promotes recruitment of proteins that mediate epigenetic repression. Mediates recruitment of the HUSH complex to H3K9me3 sites: the HUSH complex is recruited to genomic loci rich in H3K9me3 and is required to maintain transcriptional silencing by promoting recruitment of SETDB1, a histone methyltransferase that mediates further deposition of H3K9me3, as well as MORC2. Binds H3K9me and promotes DNA methylation by recruiting DNMT3A to target CpG sites; these can be situated within the coding region of the gene. Mediates down-regulation of CDH1 expression. Also represses L1 retrotransposons in collaboration with MORC2 and, probably, SETDB1, the silencing is dependent of repressive epigenetic modifications, such as H3K9me3 mark. Silencing events often occur within introns of transcriptionally active genes, and lead to the down-regulation of host gene expression. The HUSH complex is also involved in the silencing of unintegrated retroviral DNA by being recruited by ZNF638: some part of the retroviral DNA formed immediately after infection remains unintegrated in the host genome and is transcriptionally repressed. The polypeptide is M-phase phosphoprotein 8 (Mus musculus (Mouse)).